The following is a 177-amino-acid chain: MPRIWKFGDSVNTDDILPGKFAPFMAGEDVFQTFAFHYVRPEFAAQVQPGDVLIGGRNWGLGSSREYAPQALKKLHIGGIVAPSFARIHYRNLLNLGIPAFEYDLTELLEDGDEVTLDAQTGLLTYADGTVQLPPPPEFLREALKEGSILEFFKKHGRFPGEEPGAEASTETASAAE.

A disordered region spans residues 157–177; sequence GRFPGEEPGAEASTETASAAE. Residues 162–177 show a composition bias toward low complexity; it reads EEPGAEASTETASAAE.

Belongs to the LeuD family. LeuD type 2 subfamily. Heterodimer of LeuC and LeuD.

It catalyses the reaction (2R,3S)-3-isopropylmalate = (2S)-2-isopropylmalate. It participates in amino-acid biosynthesis; L-leucine biosynthesis; L-leucine from 3-methyl-2-oxobutanoate: step 2/4. Its function is as follows. Catalyzes the isomerization between 2-isopropylmalate and 3-isopropylmalate, via the formation of 2-isopropylmaleate. The sequence is that of 3-isopropylmalate dehydratase small subunit 1 (leuD1) from Deinococcus radiodurans (strain ATCC 13939 / DSM 20539 / JCM 16871 / CCUG 27074 / LMG 4051 / NBRC 15346 / NCIMB 9279 / VKM B-1422 / R1).